The primary structure comprises 263 residues: Non-homologous end joining protein Ku 3 (263 aa).

The region spanning 6 to 169 (FGLVSVPVQL…WADEVRDPHR (164 aa)) is the Ku domain.

The protein belongs to the prokaryotic Ku family. Homodimer. Interacts with LigD.

Its function is as follows. With LigD forms a non-homologous end joining (NHEJ) DNA repair enzyme, which repairs dsDNA breaks with reduced fidelity. Binds linear dsDNA with 5'- and 3'- overhangs but not closed circular dsDNA nor ssDNA. Recruits and stimulates the ligase activity of LigD. This is Non-homologous end joining protein Ku 3 from Saccharopolyspora erythraea (strain ATCC 11635 / DSM 40517 / JCM 4748 / NBRC 13426 / NCIMB 8594 / NRRL 2338).